The following is a 230-amino-acid chain: RNA polymerase sigma factor FliA (230 aa).

Positions 6–78 (LWQRYVPLVR…MLDELRSRDW (73 aa)) are sigma-70 factor domain-2. The Interaction with polymerase core subunit RpoC motif lies at 33-36 (DLLQ). The segment at 86-156 (NAREVASAMQ…VEPMLEGHED (71 aa)) is sigma-70 factor domain-3. The sigma-70 factor domain-4 stretch occupies residues 175–223 (AIEALPEREKMVLTLYYQEELNLKEIGAVLEVGESRVSQLHSQAIKRLR). The H-T-H motif DNA-binding region spans 197–216 (LKEIGAVLEVGESRVSQLHS).

Belongs to the sigma-70 factor family. FliA subfamily.

The protein resides in the cytoplasm. Its function is as follows. Sigma factors are initiation factors that promote the attachment of RNA polymerase to specific initiation sites and are then released. This sigma factor controls the expression of flagella-related genes. The polypeptide is RNA polymerase sigma factor FliA (Yersinia enterocolitica).